Reading from the N-terminus, the 203-residue chain is Recombination protein RecR (203 aa).

Residues 57 to 73 (CQSCGTLKSNSLGCNNC) form a C4-type zinc finger. The Toprim domain occupies 81 to 175 (NKICVVEDIA…KVTKLAQGLP (95 aa)).

This sequence belongs to the RecR family.

Its function is as follows. May play a role in DNA repair. It seems to be involved in an RecBC-independent recombinational process of DNA repair. It may act with RecF and RecO. The protein is Recombination protein RecR of Pelagibacter ubique (strain HTCC1062).